Here is a 465-residue protein sequence, read N- to C-terminus: Paired box protein Pax-8 (465 aa).

The segment at residues 26–152 (GHGGLNQLGG…SSINRIIRTK (127 aa)) is a DNA-binding region (paired). The PAI subdomain stretch occupies residues 29–85 (GLNQLGGAFVNGRPLPEVVRQRIVDLAHQGVRPCDISRQLRVSHGCVSKILGRYYET). The tract at residues 104–152 (KVVEKIGDYKRQNPTMFAWEIRDRLLTDGVCDNDTVPSVSSINRIIRTK) is RED subdomain. Positions 206-227 (PSADGKRKLDDSDQESCRLSID) are disordered.

Expression starts at late gastrula stages in cells fated to become the primordia of the otic system and the pronephric kidney. Expression is maintained in these two structures through late tailbud stages. Does not appear to be expressed in the thyroid gland.

It is found in the nucleus. Probable transcription factor. Involved in kidney development, acting synergistically with lhx1/lim-1 to establish the pronephric primordium in late gastrulae/early neurulae. This Xenopus laevis (African clawed frog) protein is Paired box protein Pax-8.